The chain runs to 327 residues: MSHLAELVASAKAAINEASDVAALDNVRVEYLGKKGHLTLQMTTLRELPPEERPAAGAVINEAKEQVQQALNARKAELEGAALNARLAAETIDVSLPGRRIENGGLHPVTRTIDRIESFFGELGFTVATGPEIEDDYHNFDALNIPGHHPARADHDTFWFDATRLLRTQTSGVQIRTMENQQPPIRIIAPGRVYRNDYDQTHTPMFHQMEGLIVDKNISFTNLKGTLHDFLNNFFEEDLQVRFRPSYFPFTEPSAEVDVMGKNGKWLEVLGCGMVHPNVLRNVGIDPEVYSGFAFGMGMERLTMLRYGVTDLRAFFENDLRFLKQFK.

Glu-252 provides a ligand contact to Mg(2+).

It belongs to the class-II aminoacyl-tRNA synthetase family. Phe-tRNA synthetase alpha subunit type 1 subfamily. As to quaternary structure, tetramer of two alpha and two beta subunits. The cofactor is Mg(2+).

Its subcellular location is the cytoplasm. It catalyses the reaction tRNA(Phe) + L-phenylalanine + ATP = L-phenylalanyl-tRNA(Phe) + AMP + diphosphate + H(+). In Klebsiella pneumoniae subsp. pneumoniae (strain ATCC 700721 / MGH 78578), this protein is Phenylalanine--tRNA ligase alpha subunit.